The primary structure comprises 304 residues: NADH-cytochrome b5 reductase 2 (304 aa).

Residues Met-9–Gly-29 form a helical membrane-spanning segment. An FAD-binding FR-type domain is found at Asn-43–Lys-155. Residues Asp-135–Gly-150 and Val-174–Leu-209 contribute to the FAD site.

The protein belongs to the flavoprotein pyridine nucleotide cytochrome reductase family. FAD is required as a cofactor.

The protein resides in the membrane. The enzyme catalyses 2 Fe(III)-[cytochrome b5] + NADH = 2 Fe(II)-[cytochrome b5] + NAD(+) + H(+). Functionally, NADH-cytochrome b5 reductases are involved in desaturation and elongation of fatty acids, cholesterol biosynthesis and drug metabolism. The protein is NADH-cytochrome b5 reductase 2 (cyb5r2) of Xenopus tropicalis (Western clawed frog).